The sequence spans 266 residues: GFP-like fluorescent chromoprotein cFP484 (266 aa).

Residues 104 to 106 (QYG) constitute a cross-link (2-iminomethyl-5-imidazolinone (Gln-Gly)). Tyrosine 105 is subject to 2,3-didehydrotyrosine.

It belongs to the GFP family. Post-translationally, contains a chromophore consisting of modified amino acid residues. The chromophore is formed by autocatalytic backbone condensation between Xaa-N and Gly-(N+2), oxidation of Tyr-(N+1) to didehydrotyrosine, and formation of a double bond to the alpha-amino nitrogen of residue Xaa-N. Maturation of the chromophore requires nothing other than molecular oxygen. The precise stereochemistry of the tyrosine has not been determined. As to expression, tentacle and oral disk.

In terms of biological role, pigment protein that is green in color. The protein is GFP-like fluorescent chromoprotein cFP484 of Clavularia sp. (Brown star polyp).